The following is a 376-amino-acid chain: 2-oxoglutarate synthase subunit KorA (376 aa).

Heterotetramer of the KorA, KorB, KorC and KorD subunits.

It catalyses the reaction 2 oxidized [2Fe-2S]-[ferredoxin] + 2-oxoglutarate + CoA = succinyl-CoA + 2 reduced [2Fe-2S]-[ferredoxin] + CO2 + H(+). The sequence is that of 2-oxoglutarate synthase subunit KorA (korA) from Methanothermobacter thermautotrophicus (strain ATCC 29096 / DSM 1053 / JCM 10044 / NBRC 100330 / Delta H) (Methanobacterium thermoautotrophicum).